A 1637-amino-acid polypeptide reads, in one-letter code: Probable serine/threonine-protein kinase gdt2 (1637 aa).

The first 19 residues, 1–19 (MNYILYILLILIIFSINNT), serve as a signal peptide directing secretion. The Extracellular segment spans residues 20–896 (FSIGSFVYTP…IPVEKINLLP (877 aa)). The helical transmembrane segment at 897 to 917 (IIVPICVTVLVLLSILIVFFG) threads the bilayer. The Cytoplasmic portion of the chain corresponds to 918–1637 (ARYYKHKKRR…NNNNNNNNNN (720 aa)). Positions 977 to 990 (SDIQTQSENNNLEP) are enriched in polar residues. The segment at 977–1000 (SDIQTQSENNNLEPTTVETTTTTT) is disordered. Residues 991–1000 (TTVETTTTTT) are compositionally biased toward low complexity. Residues 1290–1547 (IIIKNYISEG…LSKYLKHLLK (258 aa)) enclose the Protein kinase domain. Residues 1296-1304 (ISEGTFGIV) and K1317 contribute to the ATP site. D1408 serves as the catalytic Proton acceptor. The disordered stretch occupies residues 1557 to 1637 (DKDKKNKKKN…NNNNNNNNNN (81 aa)). Composition is skewed to low complexity over residues 1568-1589 (NNNNNNNNNNNNNNNNNNNNNN) and 1597-1637 (NNNI…NNNN).

In the N-terminal section; belongs to the GDT family. The protein in the C-terminal section; belongs to the protein kinase superfamily. TKL Ser/Thr protein kinase family.

It localises to the membrane. The catalysed reaction is L-seryl-[protein] + ATP = O-phospho-L-seryl-[protein] + ADP + H(+). The enzyme catalyses L-threonyl-[protein] + ATP = O-phospho-L-threonyl-[protein] + ADP + H(+). Functionally, regulates the transition between growth and differentiation. In Dictyostelium discoideum (Social amoeba), this protein is Probable serine/threonine-protein kinase gdt2 (gdt2).